The following is a 179-amino-acid chain: Stathmin-2 (179 aa).

The segment at 1-26 (MAKTAMAYKEKMKELSMLSLICSCFY) is membrane attachment. At serine 16 the chain carries Phosphoserine. Residues cysteine 22 and cysteine 24 are each lipidated (S-palmitoyl cysteine). Residues 38–179 (DDMEVKQINK…NKELQVELSG (142 aa)) enclose the SLD domain. The interval 39–96 (DMEVKQINKRASGQAFELILKPPSPISEAPRTLASPKKKDLSLEEIQKKLEAAEERRK) is regulatory/phosphorylation domain. Phosphoserine is present on residues serine 50, serine 62, serine 73, and serine 97. Positions 75–179 (KKKDLSLEEI…NKELQVELSG (105 aa)) form a coiled coil.

It belongs to the stathmin family. In terms of assembly, interacts with MAPK8. Interacts with ITM2C. Interacts with KIFBP. Interacts (via the N-terminal region) with CIB1 (via C-terminal region); the interaction is direct, occurs in a calcium-dependent manner and attenuates the neurite outgrowth inhibition of STMN2. Post-translationally, sumoylated. In terms of processing, phosphorylated mostly by MAPK8, but also by MAPK9 and MAPK10 in the developing brain cortex. N-terminal palmitoylation promotes specific anchoring to the cytosolic leaflet of Golgi membranes and subsequent vesicular trafficking along dendrites and axons. Neuronal Stathmins are substrates for palmitoyltransferases ZDHHC3, ZDHHC7 and ZDHHC15. As to expression, neuron specific.

It is found in the cytoplasm. It localises to the perinuclear region. The protein resides in the cell projection. The protein localises to the growth cone. Its subcellular location is the membrane. It is found in the axon. It localises to the golgi apparatus. The protein resides in the endosome. The protein localises to the lamellipodium. Its function is as follows. Regulator of microtubule stability. When phosphorylated by MAPK8, stabilizes microtubules and consequently controls neurite length in cortical neurons. In the developing brain, negatively regulates the rate of exit from multipolar stage and retards radial migration from the ventricular zone. This is Stathmin-2 (STMN2) from Homo sapiens (Human).